The chain runs to 148 residues: 1,4-dihydroxy-2-naphthoyl-CoA hydrolase (148 aa).

The active site involves aspartate 15.

The protein belongs to the 4-hydroxybenzoyl-CoA thioesterase family. DHNA-CoA hydrolase subfamily.

The catalysed reaction is 1,4-dihydroxy-2-naphthoyl-CoA + H2O = 1,4-dihydroxy-2-naphthoate + CoA + H(+). Its pathway is cofactor biosynthesis; phylloquinone biosynthesis. It functions in the pathway quinol/quinone metabolism; 1,4-dihydroxy-2-naphthoate biosynthesis; 1,4-dihydroxy-2-naphthoate from chorismate: step 7/7. In terms of biological role, catalyzes the hydrolysis of 1,4-dihydroxy-2-naphthoyl-CoA (DHNA-CoA) to 1,4-dihydroxy-2-naphthoate (DHNA), a reaction involved in phylloquinone (vitamin K1) biosynthesis. The polypeptide is 1,4-dihydroxy-2-naphthoyl-CoA hydrolase (Nostoc sp. (strain PCC 7120 / SAG 25.82 / UTEX 2576)).